The sequence spans 448 residues: uncharacterized protein (448 aa).

Lys-280 bears the N6-(pyridoxal phosphate)lysine mark.

Belongs to the class-III pyridoxal-phosphate-dependent aminotransferase family.

Its subcellular location is the cytoplasm. It localises to the mitochondrion. This is an uncharacterized protein from Schizosaccharomyces pombe (strain 972 / ATCC 24843) (Fission yeast).